The primary structure comprises 1167 residues: Outer membrane protein SlpA (1167 aa).

An N-terminal signal peptide occupies residues Met-1–Ala-22. At Ala-23–Phe-254 the chain is on the periplasmic side. The SLH domain maps to Gln-29–Ala-92. A beta stranded membrane pass occupies residues Ser-255–Arg-268. Residues Thr-269 to Ala-377 are Extracellular-facing. 6 residues coordinate Cu(2+): Asp-274, Asp-276, Arg-305, Phe-308, Asp-310, and Glu-381. Residues Arg-378 to Ser-403 form a beta stranded membrane-spanning segment. Residues Gly-404–Leu-416 are Periplasmic-facing. Residues Gln-417 to Val-428 form a beta stranded membrane-spanning segment. Over Thr-429 to Gly-471 the chain is Extracellular. Residues Asp-438, Asn-442, Lys-444, Asp-446, and Glu-449 each contribute to the Fe(3+) site. Residues Asn-472 to Val-490 form a beta stranded membrane-spanning segment. Residues Gly-491 to Pro-494 lie on the Periplasmic side of the membrane. Residues Val-495–Gly-500 traverse the membrane as a beta stranded segment. The Extracellular segment spans residues Gln-501 to Arg-519. The Cu(2+) site is built by Asp-513 and Asn-515. Residues Gly-520–Asp-528 traverse the membrane as a beta stranded segment. Topologically, residues Gly-529 to Pro-540 are periplasmic. A beta stranded transmembrane segment spans residues Gln-541–Arg-549. Cu(2+)-binding residues include Arg-549, Gly-551, Asp-553, and Gly-559. Over Ser-550 to Gly-561 the chain is Extracellular. Residues Val-562–Ile-571 form a beta stranded membrane-spanning segment. Residues Thr-572–Leu-577 lie on the Periplasmic side of the membrane. Residues Thr-578–Arg-588 form a beta stranded membrane-spanning segment. Over Asp-589–Pro-601 the chain is Extracellular. A beta stranded membrane pass occupies residues Ser-602–Ala-615. Residues Phe-616 to Gly-617 lie on the Periplasmic side of the membrane. The beta stranded transmembrane segment at Val-618–Arg-630 threads the bilayer. A deinoxanthin-binding site is contributed by Ser-622. At Pro-631–Val-638 the chain is on the extracellular side. The beta stranded transmembrane segment at Gln-639–Ala-649 threads the bilayer. The Periplasmic portion of the chain corresponds to Thr-650–Thr-670. The chain crosses the membrane as a beta stranded span at residues Phe-671 to Lys-682. Topologically, residues Ile-683 to Ile-753 are extracellular. Gly-716 contributes to the Cu(2+) binding site. A beta stranded membrane pass occupies residues Gly-754 to Leu-766. The Periplasmic portion of the chain corresponds to Gly-767–Pro-768. The chain crosses the membrane as a beta stranded span at residues Val-769–Thr-779. Residues Gly-780–Arg-788 lie on the Extracellular side of the membrane. Residues Met-789 to Val-798 form a beta stranded membrane-spanning segment. Residues Ala-799–Ile-802 are Periplasmic-facing. The chain crosses the membrane as a beta stranded span at residues Phe-803–Ser-814. Over Asn-815–Asp-831 the chain is Extracellular. A beta stranded membrane pass occupies residues Ala-832–Val-843. The Periplasmic segment spans residues Thr-844–Gly-848. The chain crosses the membrane as a beta stranded span at residues Leu-849–Val-860. The Extracellular portion of the chain corresponds to Asn-861–Thr-931. The beta stranded transmembrane segment at Ser-932–Ala-940 threads the bilayer. Residues Gly-941–Lys-949 are Periplasmic-facing. The beta stranded transmembrane segment at Asp-950 to Val-960 threads the bilayer. At Tyr-961–Ser-976 the chain is on the extracellular side. The chain crosses the membrane as a beta stranded span at residues Val-977–Val-988. The Periplasmic portion of the chain corresponds to Gly-989–Val-990. The beta stranded transmembrane segment at Ala-991 to Thr-1002 threads the bilayer. At Asn-1003–Arg-1014 the chain is on the extracellular side. Residues Gly-1015–Thr-1023 traverse the membrane as a beta stranded segment. Over Asp-1024–Arg-1032 the chain is Periplasmic. Residues Pro-1033–Asn-1046 form a beta stranded membrane-spanning segment. Residues Arg-1047 to Asn-1052 are Extracellular-facing. The chain crosses the membrane as a beta stranded span at residues Tyr-1053 to Leu-1066. Over Asn-1067–Gln-1073 the chain is Periplasmic. Residues Thr-1074–Gln-1086 form a beta stranded membrane-spanning segment. Residues Asn-1087 to Asn-1108 are Extracellular-facing. Residues Arg-1109–Tyr-1122 traverse the membrane as a beta stranded segment. Residues Gln-1123 to Asp-1124 lie on the Periplasmic side of the membrane. A beta stranded membrane pass occupies residues Leu-1125–Asp-1138. Over Leu-1139–Pro-1153 the chain is Extracellular. A beta stranded membrane pass occupies residues Ala-1154–Asn-1166. Residue Phe-1167 is a topological domain, periplasmic.

In terms of assembly, homotrimer. Part of a heterooligomeric complex resulting in the main assembly named S-layer deinoxanthin-binding complex (SDBC) which is composed of six different subunits, namely SlpA, DR_2310, DR_0505, DR_A0283, DR_A0282, and DR_A0281.

Its subcellular location is the cell envelope. The protein resides in the cell outer membrane. The enzyme catalyses L-arginine(in) = L-arginine(out). The catalysed reaction is L-lysine(in) = L-lysine(out). It catalyses the reaction L-glutamate(out) = L-glutamate(in). Plays an important role in the structural organization and integrity of the cell envelope, bridging the outer membrane to the peptidoglyan layer. Is a highly abundant molecule in the D.radiodurans cell envelope but is not a fundamental component of the S-layer. Binds the carotenoid deinoxanthin, a strong protective antioxidant specific of this bacterium, and could be part of the first lane of defense against UV radiation, especially under desiccation. Appears to be a nonselective channel. Is able to transport charged amino acids such as Lys, Arg and Glu; the large dimension of the pore points toward the physiological importance of the SDBC complex in assisting and allowing the exchange of substances, including nutrients, with the surrounding environment. The chain is Outer membrane protein SlpA from Deinococcus radiodurans (strain ATCC 13939 / DSM 20539 / JCM 16871 / CCUG 27074 / LMG 4051 / NBRC 15346 / NCIMB 9279 / VKM B-1422 / R1).